The sequence spans 290 residues: Glycine--tRNA ligase alpha subunit (290 aa).

The protein belongs to the class-II aminoacyl-tRNA synthetase family. In terms of assembly, tetramer of two alpha and two beta subunits.

It is found in the cytoplasm. The catalysed reaction is tRNA(Gly) + glycine + ATP = glycyl-tRNA(Gly) + AMP + diphosphate. In Nitratiruptor sp. (strain SB155-2), this protein is Glycine--tRNA ligase alpha subunit.